The following is a 310-amino-acid chain: Putative S-adenosyl-L-methionine-dependent methyltransferase MAB_4587c (310 aa).

S-adenosyl-L-methionine is bound by residues Asp-126 and 155–156 (DL).

Belongs to the UPF0677 family.

Exhibits S-adenosyl-L-methionine-dependent methyltransferase activity. This Mycobacteroides abscessus (strain ATCC 19977 / DSM 44196 / CCUG 20993 / CIP 104536 / JCM 13569 / NCTC 13031 / TMC 1543 / L948) (Mycobacterium abscessus) protein is Putative S-adenosyl-L-methionine-dependent methyltransferase MAB_4587c.